The primary structure comprises 349 residues: Protein O-mannose kinase (349 aa).

Topologically, residues 1-19 (MGQQHGARNGLTHRELPRG) are cytoplasmic. The chain crosses the membrane as a helical; Signal-anchor for type II membrane protein span at residues 20–42 (MGLLLAMALMNVVLYVCLDHLFI). Residues 43–349 (SPGRATEDPR…TVMSQTKEML (307 aa)) are Lumenal-facing. Residues Asn66, Asn164, and Asn219 are each glycosylated (N-linked (GlcNAc...) asparagine). Positions 80–349 (VRQLKLVGEG…TVMSQTKEML (270 aa)) constitute a Protein kinase domain.

This sequence belongs to the protein kinase superfamily. Ser/Thr protein kinase family. STKL subfamily.

The protein resides in the endoplasmic reticulum membrane. The catalysed reaction is 3-O-[beta-D-GalNAc-(1-&gt;3)-beta-D-GlcNAc-(1-&gt;4)-alpha-D-Man]-L-Thr-[protein] + ATP = 3-O-[beta-D-GalNAc-(1-&gt;3)-beta-D-GlcNAc-(1-&gt;4)-(O-6-P-alpha-D-Man)]-Thr-[protein] + ADP + H(+). Its function is as follows. Protein O-mannose kinase that specifically mediates phosphorylation at the 6-position of an O-mannose of the trisaccharide (N-acetylgalactosamine (GalNAc)-beta-1,3-N-acetylglucosamine (GlcNAc)-beta-1,4-mannose) to generate phosphorylated O-mannosyl trisaccharide (N-acetylgalactosamine-beta-1,3-N-acetylglucosamine-beta-1,4-(phosphate-6-)mannose). Phosphorylated O-mannosyl trisaccharide is a carbohydrate structure present in alpha-dystroglycan (DAG1), which is required for binding laminin G-like domain-containing extracellular proteins with high affinity. Only shows kinase activity when the GalNAc-beta-3-GlcNAc-beta-terminus is linked to the 4-position of O-mannose, suggesting that this disaccharide serves as the substrate recognition motif. The protein is Protein O-mannose kinase (Pomk) of Rattus norvegicus (Rat).